We begin with the raw amino-acid sequence, 923 residues long: Periplasmic nitrate reductase (923 aa).

The segment at residues 1 to 30 (MNRRDFIKNTAIASAASVAGLSVPSSMLGA) is a signal peptide (tat-type signal). The region spanning 34–90 (WKWDKAVCRFCGTGCGIMIARKDGKIVATKGDPAAPVNRGLNCIKGYFNAKIMYGED) is the 4Fe-4S Mo/W bis-MGD-type domain. [4Fe-4S] cluster contacts are provided by Cys41, Cys44, Cys48, and Cys76. Residues Lys78, Gln146, Asn171, Cys175, 208-215 (WGANMAEM), Met416, Gln420, Asn526, 551-552 (SD), Lys574, Asp601, and 813-822 (TGRVLEHWHS) contribute to the Mo-bis(molybdopterin guanine dinucleotide) site. Position 889 (Trp889) interacts with substrate. Asn897 and Lys914 together coordinate Mo-bis(molybdopterin guanine dinucleotide).

The protein belongs to the prokaryotic molybdopterin-containing oxidoreductase family. NasA/NapA/NarB subfamily. As to quaternary structure, component of the periplasmic nitrate reductase NapAB complex composed of NapA and NapB. It depends on [4Fe-4S] cluster as a cofactor. Mo-bis(molybdopterin guanine dinucleotide) is required as a cofactor. Predicted to be exported by the Tat system. The position of the signal peptide cleavage has not been experimentally proven.

Its subcellular location is the periplasm. It catalyses the reaction 2 Fe(II)-[cytochrome] + nitrate + 2 H(+) = 2 Fe(III)-[cytochrome] + nitrite + H2O. Catalytic subunit of the periplasmic nitrate reductase complex NapAB. Receives electrons from NapB and catalyzes the reduction of nitrate to nitrite. In Campylobacter jejuni subsp. jejuni serotype O:23/36 (strain 81-176), this protein is Periplasmic nitrate reductase.